The following is a 184-amino-acid chain: MFSSKENSLGAKRAPFSSNTTSSQRVAAQAAKRASSGAFAQLTSSQIQELKEAFALLDKDGDGNIGREDVKTMLTSLNQDASEDSINHMFESINPPINLAAFLTAMGSMLCRISPRNDLLEAFSTFDDTQSGKIPISTMRDALSSMGDRMDPQEVESILRSYTSHGVFYYEKFVDAIAGSKDSN.

A disordered region spans residues 1–29; it reads MFSSKENSLGAKRAPFSSNTTSSQRVAAQ. Ser-36 carries the post-translational modification Phosphoserine. 2 EF-hand domains span residues 45-80 and 114-149; these read SQIQELKEAFALLDKDGDGNIGREDVKTMLTSLNQD and SPRNDLLEAFSTFDDTQSGKIPISTMRDALSSMGDR. 5 residues coordinate Ca(2+): Asp-58, Asp-60, Asp-62, Asn-64, and Asp-69.

Binds to myosin II chains myo2 and myo3.

The protein localises to the cytoplasm. This is Myosin regulatory light chain 1 (rlc1) from Schizosaccharomyces pombe (strain 972 / ATCC 24843) (Fission yeast).